The primary structure comprises 365 residues: UDP-N-acetylglucosamine--N-acetylmuramyl-(pentapeptide) pyrophosphoryl-undecaprenol N-acetylglucosamine transferase (365 aa).

UDP-N-acetyl-alpha-D-glucosamine is bound by residues 17–19 (TGG), asparagine 129, arginine 167, serine 194, isoleucine 250, 269–274 (ALTVSE), and glutamine 295.

It belongs to the glycosyltransferase 28 family. MurG subfamily.

It is found in the cell inner membrane. It carries out the reaction di-trans,octa-cis-undecaprenyl diphospho-N-acetyl-alpha-D-muramoyl-L-alanyl-D-glutamyl-meso-2,6-diaminopimeloyl-D-alanyl-D-alanine + UDP-N-acetyl-alpha-D-glucosamine = di-trans,octa-cis-undecaprenyl diphospho-[N-acetyl-alpha-D-glucosaminyl-(1-&gt;4)]-N-acetyl-alpha-D-muramoyl-L-alanyl-D-glutamyl-meso-2,6-diaminopimeloyl-D-alanyl-D-alanine + UDP + H(+). It participates in cell wall biogenesis; peptidoglycan biosynthesis. Functionally, cell wall formation. Catalyzes the transfer of a GlcNAc subunit on undecaprenyl-pyrophosphoryl-MurNAc-pentapeptide (lipid intermediate I) to form undecaprenyl-pyrophosphoryl-MurNAc-(pentapeptide)GlcNAc (lipid intermediate II). The polypeptide is UDP-N-acetylglucosamine--N-acetylmuramyl-(pentapeptide) pyrophosphoryl-undecaprenol N-acetylglucosamine transferase (Shewanella pealeana (strain ATCC 700345 / ANG-SQ1)).